Consider the following 514-residue polypeptide: MYRKLAVISAFLATARAQSACTLQSETHPPLTWQKCSSGGTCTQQTGSVVIDANWRWTHATNSSTNCYDGNTWSSTLCPDNETCAKNCCLDGAAYASTYGVTTSGNSLSIGFVTQSAQKNVGARLYLMASDTTYQEFTLLGNEFSFDVDVSQLPCGLNGALYFVSMDADGGVSKYPTNTAGAKYGTGYCDSQCPRDLKFINGQANVEGWEPSSNNANTGIGGHGSCCSEMDIWEANSISEALTPHPCTTVGQEICEGDGCGGTYSDNRYGGTCDPDGCDWNPYRLGNTSFYGPGSSFTLDTTKKLTVVTQFETSGAINRYYVQNGVTFQQPNAELGSYSGNELNDDYCTAEEAEFGGSSFSDKGGLTQFKKATSGGMVLVMSLWDDYYANMLWLDSTYPTNETSSTPGAVRGSCSTSSGVPAQVESQSPNAKVTFSNIKFGPIGSTGNPSGGNPPGGNPPGTTTTRRPATTTGSSPGPTQSHYGQCGGIGYSGPTVCASGTTCQVLNPYYSQCL.

The N-terminal stretch at 1–17 is a signal peptide; that stretch reads MYRKLAVISAFLATARA. Q18 carries the pyrrolidone carboxylic acid modification. A catalytic region spans residues 18–453; the sequence is QSACTLQSET…GSTGNPSGGN (436 aa). 10 cysteine pairs are disulfide-bonded: C21–C89, C36–C42, C67–C88, C78–C84, C155–C414, C189–C227, C193–C226, C247–C273, C255–C260, and C278–C348. The N-linked (GlcNAc) asparagine glycan is linked to N62. E229 serves as the catalytic Nucleophile. Catalysis depends on E234, which acts as the Proton donor/acceptor. Residue N287 is glycosylated (N-linked (GlcNAc...) (high mannose) asparagine). N401 carries an N-linked (GlcNAc) asparagine glycan. Residues 401–437 show a composition bias toward polar residues; sequence NETSSTPGAVRGSCSTSSGVPAQVESQSPNAKVTFSN. A disordered region spans residues 401–481; sequence NETSSTPGAV…TGSSPGPTQS (81 aa). Positions 454–478 are linker; it reads PPGGNPPGTTTTRRPATTTGSSPGP. Residues 460–479 show a composition bias toward low complexity; it reads PGTTTTRRPATTTGSSPGPT. O-linked (Man) threonine glycosylation occurs at T462. O-linked (Man...) threonine glycans are attached at residues T463, T464, and T465. T470 carries an O-linked (Man) threonine glycan. 2 O-linked (Man...) threonine glycosylation sites follow: T471 and T472. S474 and S475 each carry an O-linked (Man) serine glycan. The 37-residue stretch at 478 to 514 folds into the CBM1 domain; it reads PTQSHYGQCGGIGYSGPTVCASGTTCQVLNPYYSQCL. Residue T479 is glycosylated (O-linked (Man) threonine). Residues S481 and S492 are each glycosylated (O-linked (Man) serine). 2 disulfide bridges follow: C486–C503 and C497–C513.

This sequence belongs to the glycosyl hydrolase 7 (cellulase C) family. N-glycosylated. A high mannose glycan is attached to Asn-287 (predominantly Man(8)GlcNAc(2)) and single GlcNAc occupancy is observed at Asn-62 and Asn-401 with some site heterogeneity depending on strains and fermentation conditions. In terms of processing, O-glycosylated. Within the linker domain, all 8 threonines are variably glycosylated with between at least one, and up to three, mannose residues per site. All serines in this domain are at least partially glycosylated with a single mannose residue. O-glycosylation of the cellulase linker provides protection from proteolysis. Linker glycans also contribute to binding affinity of cellobiohydrolases to cellulose.

The protein resides in the secreted. The enzyme catalyses Hydrolysis of (1-&gt;4)-beta-D-glucosidic linkages in cellulose and cellotetraose, releasing cellobiose from the non-reducing ends of the chains.. Its function is as follows. Exocellobiohydrolases (CBH) that catalyzes the hydrolysis of 1,4-beta-D-glucosidic bonds in cellulose to release the disaccharide cellobiose. The degradation of cellulose involves an interplay between different cellulolytic enzymes. Hydrolysis starts with endoglucanases (EGs), which cut internal beta-1,4-glucosidic bonds in cellulose to reduce the polymerization degree of the substrate and create new chain ends for exocellobiohydrolases (CBHs). The CBHs release the disaccharide cellobiose from the non-reducing end of the cellulose polymer chain. Finally, beta-1,4-glucosidases hydrolyze the cellobiose and other short cello-oligosaccharides into glucose units. The sequence is that of Exoglucanase 1 (cbh1) from Hypocrea jecorina (strain ATCC 56765 / BCRC 32924 / NRRL 11460 / Rut C-30) (Trichoderma reesei).